The sequence spans 398 residues: Serine/threonine-protein kinase ppk23 (398 aa).

One can recognise a Protein kinase domain in the interval 74–359 (YEILEKIEEG…AKEALEHPYF (286 aa)). ATP is bound by residues 80–88 (IEEGSYGIV) and Lys-103. Residue Asp-198 is the Proton acceptor of the active site. Residues 359–398 (FYESPRPKDPKFFPTFPSKAKGESKEKNVFQSFRSASPKK) form a disordered region. Residues 387-398 (VFQSFRSASPKK) are compositionally biased toward polar residues.

Belongs to the protein kinase superfamily. Ser/Thr protein kinase family.

Its subcellular location is the nucleus. The catalysed reaction is L-seryl-[protein] + ATP = O-phospho-L-seryl-[protein] + ADP + H(+). It carries out the reaction L-threonyl-[protein] + ATP = O-phospho-L-threonyl-[protein] + ADP + H(+). This chain is Serine/threonine-protein kinase ppk23 (ppk23), found in Schizosaccharomyces pombe (strain 972 / ATCC 24843) (Fission yeast).